Here is a 385-residue protein sequence, read N- to C-terminus: Elongation factor Ts, mitochondrial (385 aa).

The N-terminal 50 residues, 1-50 (MAWSQSARKPMIGLLFRAQQHGARGYSYSAFQAHLSSSNVDQSATLLRRF), are a transit peptide targeting the mitochondrion.

It belongs to the EF-Ts family.

It localises to the mitochondrion. Functionally, associates with the EF-Tu.GDP complex and induces the exchange of GDP to GTP. It remains bound to the aminoacyl-tRNA.EF-Tu.GTP complex up to the GTP hydrolysis stage on the ribosome. The protein is Elongation factor Ts, mitochondrial of Oryza sativa subsp. indica (Rice).